The chain runs to 551 residues: Ubiquitin carboxyl-terminal hydrolase 24 (551 aa).

2 disordered regions span residues 51 to 104 (NSSV…SLRV) and 163 to 188 (NEDFSSDSSSGSIQRKKNLKVPTESV). The region spanning 197–551 (RGLINAGNLC…QAYVLFYKQV (355 aa)) is the USP domain. The active-site Nucleophile is cysteine 206. Residues 329-338 (SKSSVISSAN) are compositionally biased toward polar residues. The tract at residues 329-349 (SKSSVISSANDDGDEWETVGP) is disordered. Histidine 510 functions as the Proton acceptor in the catalytic mechanism.

The protein belongs to the peptidase C19 family.

The enzyme catalyses Thiol-dependent hydrolysis of ester, thioester, amide, peptide and isopeptide bonds formed by the C-terminal Gly of ubiquitin (a 76-residue protein attached to proteins as an intracellular targeting signal).. Recognizes and hydrolyzes the peptide bond at the C-terminal Gly of ubiquitin. Involved in the processing of poly-ubiquitin precursors as well as that of ubiquitinated proteins. This chain is Ubiquitin carboxyl-terminal hydrolase 24 (UBP24), found in Arabidopsis thaliana (Mouse-ear cress).